Reading from the N-terminus, the 361-residue chain is Alanine racemase (361 aa).

The active-site Proton acceptor; specific for D-alanine is the Lys35. An N6-(pyridoxal phosphate)lysine modification is found at Lys35. Arg130 is a binding site for substrate. The active-site Proton acceptor; specific for L-alanine is Tyr257. Met305 provides a ligand contact to substrate.

Belongs to the alanine racemase family. Requires pyridoxal 5'-phosphate as cofactor.

The catalysed reaction is L-alanine = D-alanine. The protein operates within amino-acid biosynthesis; D-alanine biosynthesis; D-alanine from L-alanine: step 1/1. Functionally, catalyzes the interconversion of L-alanine and D-alanine. May also act on other amino acids. This chain is Alanine racemase (alr), found in Nitrosomonas eutropha (strain DSM 101675 / C91 / Nm57).